Here is a 140-residue protein sequence, read N- to C-terminus: FAD synthase (140 aa).

ATP-binding positions include 9-10 (TF), 14-17 (HPGH), N92, and Y119.

Belongs to the archaeal FAD synthase family. As to quaternary structure, homodimer. A divalent metal cation is required as a cofactor.

The catalysed reaction is FMN + ATP + H(+) = FAD + diphosphate. Its pathway is cofactor biosynthesis; FAD biosynthesis; FAD from FMN: step 1/1. Its function is as follows. Catalyzes the transfer of the AMP portion of ATP to flavin mononucleotide (FMN) to produce flavin adenine dinucleotide (FAD) coenzyme. The sequence is that of FAD synthase from Methanocorpusculum labreanum (strain ATCC 43576 / DSM 4855 / Z).